Reading from the N-terminus, the 715-residue chain is Fatty acid oxidation complex subunit alpha (715 aa).

The tract at residues 1–190 (MIYQGKAITV…KVGAVDAVVA (190 aa)) is enoyl-CoA hydratase/isomerase. Asp-297 is a binding site for substrate. The segment at 312 to 715 (KDVKLAAVLG…MAKNGQKFFG (404 aa)) is 3-hydroxyacyl-CoA dehydrogenase. Residues Met-325, Asp-344, 401–403 (VVE), Lys-408, and Ser-430 each bind NAD(+). Catalysis depends on His-451, which acts as the For 3-hydroxyacyl-CoA dehydrogenase activity. Asn-454 contributes to the NAD(+) binding site. Residues Asn-501 and Tyr-660 each coordinate substrate.

It in the N-terminal section; belongs to the enoyl-CoA hydratase/isomerase family. This sequence in the C-terminal section; belongs to the 3-hydroxyacyl-CoA dehydrogenase family. In terms of assembly, heterotetramer of two alpha chains (FadB) and two beta chains (FadA).

It carries out the reaction a (3S)-3-hydroxyacyl-CoA + NAD(+) = a 3-oxoacyl-CoA + NADH + H(+). It catalyses the reaction a (3S)-3-hydroxyacyl-CoA = a (2E)-enoyl-CoA + H2O. The catalysed reaction is a 4-saturated-(3S)-3-hydroxyacyl-CoA = a (3E)-enoyl-CoA + H2O. The enzyme catalyses (3S)-3-hydroxybutanoyl-CoA = (3R)-3-hydroxybutanoyl-CoA. It carries out the reaction a (3Z)-enoyl-CoA = a 4-saturated (2E)-enoyl-CoA. It catalyses the reaction a (3E)-enoyl-CoA = a 4-saturated (2E)-enoyl-CoA. It participates in lipid metabolism; fatty acid beta-oxidation. In terms of biological role, involved in the aerobic and anaerobic degradation of long-chain fatty acids via beta-oxidation cycle. Catalyzes the formation of 3-oxoacyl-CoA from enoyl-CoA via L-3-hydroxyacyl-CoA. It can also use D-3-hydroxyacyl-CoA and cis-3-enoyl-CoA as substrate. In Pseudomonas paraeruginosa (strain DSM 24068 / PA7) (Pseudomonas aeruginosa (strain PA7)), this protein is Fatty acid oxidation complex subunit alpha.